The primary structure comprises 1535 residues: Lysine-specific demethylase 5D (1535 aa).

The region spanning 14 to 55 is the JmjN domain; the sequence is CPVFEPSWAEFQDPLGYIAKIRPIAEKSGICKIRPPADWQPP. The ARID domain occupies 79 to 169; sequence TRVKLNYLDQ…IIYPYEMFQS (91 aa). The tract at residues 192–227 is disordered; that stretch reads PHSIPLRQSVQPSKFSSYSRRAKRLQPDPEPTEEDI. Polar residues predominate over residues 197–210; the sequence is LRQSVQPSKFSSYS. Glycyl lysine isopeptide (Lys-Gly) (interchain with G-Cter in SUMO2) cross-links involve residues Lys205, Lys229, Lys244, and Lys272. Phosphoserine occurs at positions 291 and 307. The PHD-type 1 zinc-finger motif lies at 314 to 364; sequence SYICQVCSRGDEDDKLLFCDGCDDNYHIFCLLPPLPEIPRGIWRCPKCILA. 2-oxoglutarate is bound at residue Tyr430. In terms of domain architecture, JmjC spans 458 to 624; sequence EYATSGWNLN…AGRQCIEHYR (167 aa). The Fe cation site is built by His504 and Glu506. Residues Ser512, Asn514, and Lys522 each coordinate 2-oxoglutarate. His592 is a binding site for Fe cation. A C5HC2 zinc finger spans residues 697-749; that stretch reads CIKCKTTCFLSALACYDCPDGLVCLSHINDLCKCSSSRQYLRYRYTLDELPTM. A Phosphoserine modification is found at Ser884. Residues 1174-1235 form a PHD-type 2 zinc finger; the sequence is ICVCGQVPAG…DTKFLCPLCM (62 aa). Ser1342 is modified (phosphoserine). Residues 1425–1519 are disordered; the sequence is HQGSRTRSRA…KDSGSSAACP (95 aa). The span at 1428-1441 shows a compositional bias: basic residues; the sequence is SRTRSRALERRRRQ. The span at 1473-1487 shows a compositional bias: basic and acidic residues; that stretch reads GREEEHYQEKADREN. A compositionally biased stretch (polar residues) spans 1490–1517; the sequence is LTPSTDHSPSLKGNQNSLQHKDSGSSAA.

Belongs to the JARID1 histone demethylase family. As to quaternary structure, interacts withPCGF6, MSH5, ZMYND8, AR. The cofactor is L-ascorbate. It depends on Fe(2+) as a cofactor.

The protein localises to the nucleus. The catalysed reaction is N(6),N(6),N(6)-trimethyl-L-lysyl(4)-[histone H3] + 3 2-oxoglutarate + 3 O2 = L-lysyl(4)-[histone H3] + 3 formaldehyde + 3 succinate + 3 CO2. Its function is as follows. Histone demethylase that specifically demethylates 'Lys-4' of histone H3, thereby playing a central role in histone code. Does not demethylate histone H3 'Lys-9', H3 'Lys-27', H3 'Lys-36', H3 'Lys-79' or H4 'Lys-20'. Demethylates trimethylated and dimethylated but not monomethylated H3 'Lys-4'. May play a role in spermatogenesis. Involved in transcriptional repression of diverse metastasis-associated genes; in this function seems to cooperate with ZMYND8. Suppresses prostate cancer cell invasion. Regulates androgen receptor (AR) transcriptional activity by demethylating H3K4me3 active transcription marks. This Pan troglodytes (Chimpanzee) protein is Lysine-specific demethylase 5D (KDM5D).